We begin with the raw amino-acid sequence, 471 residues long: Acetylcholinesterase collagenic tail peptide (471 aa).

An N-terminal signal peptide occupies residues 1–30 (MLGILLQKATATLASGLNSSRAGMFPIALG). Residues 70 to 86 (CCLLTPPPPPMFPPPFF) form a PRAD region. 2 Collagen-like domains span residues 118-282 (GPPG…SGLP) and 293-307 (GPKG…VGRC). Disordered stretches follow at residues 140–205 (EIGE…GEKG) and 237–267 (KGVS…IGPP). Low complexity-rich tracts occupy residues 155–164 (VRGPRGMPGS) and 242–251 (APGHRGPVGR). Repeat copies occupy residues 388-413 (FCGD…TDSC) and 420-443 (YCGD…YHTC). Residues 388-443 (FCGDEIVQVENGEECDDGNRIVTDSCINCKQAYCGDGYLQSGLEECDGKDFGYHTC) form a 2 X 26 AA approximate repeats region.

It belongs to the COLQ family. As to quaternary structure, the asymmetric form of AChE is a disulfide-bonded oligomer composed of a collagenic subunit (Q) and a variable number of asymmetric (T) catalytic subunits. The N-terminal of the collagenic subunit (Q) associates with the C-terminal of the catalytic subunit (T). As to expression, expressed in electric organs but not in muscle.

It is found in the synapse. Functionally, anchors the catalytic subunits of asymmetric AChE to the synaptic basal lamina. This Torpedo marmorata (Marbled electric ray) protein is Acetylcholinesterase collagenic tail peptide.